The sequence spans 161 residues: Large ribosomal subunit protein uL15 (161 aa).

The disordered stretch occupies residues 1 to 39 (MTKLNELAPREGSTKGRMRVGRGPGSGKGKTAGRGVKGQ). Gly residues predominate over residues 22 to 36 (RGPGSGKGKTAGRGV).

The protein belongs to the universal ribosomal protein uL15 family. In terms of assembly, part of the 50S ribosomal subunit.

Binds to the 23S rRNA. The sequence is that of Large ribosomal subunit protein uL15 from Caulobacter vibrioides (strain ATCC 19089 / CIP 103742 / CB 15) (Caulobacter crescentus).